The sequence spans 356 residues: Cyclin-D2-2 (356 aa).

A compositionally biased stretch (polar residues) spans 325-343 (LGSSQSNSNNKDYNSQDSA). Residues 325–356 (LGSSQSNSNNKDYNSQDSAPASKRRRLNTTPI) form a disordered region. Residues 346 to 356 (SKRRRLNTTPI) are compositionally biased toward basic residues.

It belongs to the cyclin family. Cyclin D subfamily.

The sequence is that of Cyclin-D2-2 (CYCD2-2) from Oryza sativa subsp. japonica (Rice).